Reading from the N-terminus, the 402-residue chain is Speedy protein E2B (402 aa).

A disordered region spans residues 1–89 (MDRTETRFRK…EEPEKELAPE (89 aa)). Residues 16-39 (GKITTSRQPHPQNEQSPQRSTSGY) are compositionally biased toward polar residues. Positions 76–89 (DESEEEPEKELAPE) are enriched in acidic residues.

The protein belongs to the Speedy/Ringo family.

This Homo sapiens (Human) protein is Speedy protein E2B (SPDYE2B).